We begin with the raw amino-acid sequence, 179 residues long: Large ribosomal subunit protein uL6 (179 aa).

This sequence belongs to the universal ribosomal protein uL6 family. Part of the 50S ribosomal subunit.

This protein binds to the 23S rRNA, and is important in its secondary structure. It is located near the subunit interface in the base of the L7/L12 stalk, and near the tRNA binding site of the peptidyltransferase center. The chain is Large ribosomal subunit protein uL6 from Mycolicibacterium vanbaalenii (strain DSM 7251 / JCM 13017 / BCRC 16820 / KCTC 9966 / NRRL B-24157 / PYR-1) (Mycobacterium vanbaalenii).